Here is a 599-residue protein sequence, read N- to C-terminus: MTTQAPPTSLLPLTPEQLARLQAAIGEYSPTQLAWLSGYFWGMVNQQPGSVAIAPVASAAASITVISASQTGNARRLAEQLRDDLLAAKLSVTLVNAGDYKFKQIAQERLLVIVASTQGEGEPAEEAVALHKFLFSKKAPKLNETAFAVFGLGDTSYENFCQSGKDFDGKLAELGAERLVERVDADVEYQELATAWRKQVVEVLKARAPAENAAPGVLASGAVDLLDSSPYSKEQPLTAQLAVKQKITGRASDKDVRHIEIDLGDSGLRYRPGDALGVWFDNDPALVDELVQLLWLKGDEPVEVEGKTLPLAQALRSHFELTQNTTPIVDKYAALSRDEKLIGLLADKAALQHYAHNTPIVDMVRQAPADLNAEQLIGLLRPLTPRLYSIASSQAENENEVHVTVGVVRYDIDGRARAGGASSFLADRLEEDGDVRVFIEHNDNFRLPANPETPVIMIGPGTGIAPFRAFMQQRDADGAGGKNWLFFGNPHFTEDFLYQVEWQRYVKDGLLTRIDLAWSRDQQHKVYVQDKLREQGAEVWRWIQEGAHIYVCGDANRMAKDVENTLLELVAEHGGMDTELADEFLSELRLERRYQRDVY.

The Flavodoxin-like domain occupies 63–201; the sequence is ITVISASQTG…LATAWRKQVV (139 aa). Residues 69-74, 116-119, and 152-161 each bind FMN; these read SQTGNA, STQG, and LGDTSYENFC. Residues 234-448 form the FAD-binding FR-type domain; the sequence is EQPLTAQLAV…IEHNDNFRLP (215 aa). FAD is bound by residues Thr-322, His-356, 386-389, 404-406, Tyr-410, and 419-422; these read RLYS, TVG, and GGAS. NADP(+) is bound by residues 519-520, 525-529, and Asp-561; these read SR and KVYVQ. Tyr-599 contributes to the FAD binding site.

Belongs to the NADPH-dependent sulphite reductase flavoprotein subunit CysJ family. This sequence in the N-terminal section; belongs to the flavodoxin family. It in the C-terminal section; belongs to the flavoprotein pyridine nucleotide cytochrome reductase family. In terms of assembly, alpha(8)-beta(8). The alpha component is a flavoprotein, the beta component is a hemoprotein. Requires FAD as cofactor. It depends on FMN as a cofactor.

It carries out the reaction hydrogen sulfide + 3 NADP(+) + 3 H2O = sulfite + 3 NADPH + 4 H(+). Its pathway is sulfur metabolism; hydrogen sulfide biosynthesis; hydrogen sulfide from sulfite (NADPH route): step 1/1. Its function is as follows. Component of the sulfite reductase complex that catalyzes the 6-electron reduction of sulfite to sulfide. This is one of several activities required for the biosynthesis of L-cysteine from sulfate. The flavoprotein component catalyzes the electron flow from NADPH -&gt; FAD -&gt; FMN to the hemoprotein component. This is Sulfite reductase [NADPH] flavoprotein alpha-component from Serratia proteamaculans (strain 568).